Reading from the N-terminus, the 447-residue chain is Phosphoglucosamine mutase (447 aa).

The active-site Phosphoserine intermediate is serine 101. Mg(2+) is bound by residues serine 101, aspartate 242, aspartate 244, and aspartate 246. A Phosphoserine modification is found at serine 101.

It belongs to the phosphohexose mutase family. Mg(2+) is required as a cofactor. In terms of processing, activated by phosphorylation.

The catalysed reaction is alpha-D-glucosamine 1-phosphate = D-glucosamine 6-phosphate. Catalyzes the conversion of glucosamine-6-phosphate to glucosamine-1-phosphate. This chain is Phosphoglucosamine mutase, found in Xanthobacter autotrophicus (strain ATCC BAA-1158 / Py2).